We begin with the raw amino-acid sequence, 145 residues long: 3-hydroxyacyl-[acyl-carrier-protein] dehydratase FabZ (145 aa).

H49 is an active-site residue.

Belongs to the thioester dehydratase family. FabZ subfamily.

The protein resides in the cytoplasm. The enzyme catalyses a (3R)-hydroxyacyl-[ACP] = a (2E)-enoyl-[ACP] + H2O. Functionally, involved in unsaturated fatty acids biosynthesis. Catalyzes the dehydration of short chain beta-hydroxyacyl-ACPs and long chain saturated and unsaturated beta-hydroxyacyl-ACPs. The chain is 3-hydroxyacyl-[acyl-carrier-protein] dehydratase FabZ from Rickettsia bellii (strain OSU 85-389).